A 153-amino-acid chain; its full sequence is Histone H2B.10 (153 aa).

2 stretches are compositionally biased toward basic and acidic residues: residues 1-28 (MAPK…EKAP) and 36-53 (EKRL…EGKK). The segment at 1-61 (MAPKAEKKPA…KKAGRKKAKK (61 aa)) is disordered. N6-acetyllysine occurs at positions 7 and 37. A Glycyl lysine isopeptide (Lys-Gly) (interchain with G-Cter in ubiquitin) cross-link involves residue Lys149.

This sequence belongs to the histone H2B family. The nucleosome is a histone octamer containing two molecules each of H2A, H2B, H3 and H4 assembled in one H3-H4 heterotetramer and two H2A-H2B heterodimers. The octamer wraps approximately 147 bp of DNA. Post-translationally, can be acetylated to form H2BK6ac and H2BK33ac. Monoubiquitinated by BRE1 to form H2BK143ub1 and deubiquitinated by UBP26. Required for heterochromatic histone H3 di- and trimethylation at H3K4me. May give a specific tag for epigenetic transcriptional activation.

It localises to the nucleus. Its subcellular location is the chromosome. Its function is as follows. Core component of nucleosome. Nucleosomes wrap and compact DNA into chromatin, limiting DNA accessibility to the cellular machineries which require DNA as a template. Histones thereby play a central role in transcription regulation, DNA repair, DNA replication and chromosomal stability. DNA accessibility is regulated via a complex set of post-translational modifications of histones, also called histone code, and nucleosome remodeling. The protein is Histone H2B.10 (H2B.10) of Oryza sativa subsp. indica (Rice).